Here is a 115-residue protein sequence, read N- to C-terminus: Large ribosomal subunit protein P2 (115 aa).

Met-1 bears the N-acetylmethionine mark. A phosphoserine mark is found at Ser-17 and Ser-19. Lys-21 is subject to N6-acetyllysine; alternate. Lys-21 is subject to N6-succinyllysine; alternate. A compositionally biased stretch (low complexity) spans 76 to 90; the sequence is APGSAAPAAGSAPAA. Positions 76–115 are disordered; it reads APGSAAPAAGSAPAAAEEKKDEKKEESEESDDDMGFGLFD. Residues Ser-79 and Ser-86 each carry the phosphoserine modification. Residues 91–101 are compositionally biased toward basic and acidic residues; the sequence is AEEKKDEKKEE. Phosphoserine is present on residues Ser-102 and Ser-105.

The protein belongs to the eukaryotic ribosomal protein P1/P2 family. As to quaternary structure, heterodimer with RPLP1 at the lateral ribosomal stalk of the large ribosomal subunit.

In terms of biological role, plays an important role in the elongation step of protein synthesis. The protein is Large ribosomal subunit protein P2 (Rplp2) of Mus musculus (Mouse).